The primary structure comprises 32 residues: Peptide tarsal-less AA (32 aa).

Residues 1-32 (MLDPTGTYRRPRDTQDSRQKRRQDCLDPTGQY) form a disordered region. The stretch at 2 to 8 (LDPTGTY) is repeat 1. The interval 2-32 (LDPTGTYRRPRDTQDSRQKRRQDCLDPTGQY) is 2 X 7 AA repeats of L-D-P-T-G-[TQ]-Y. Basic and acidic residues predominate over residues 10–25 (RPRDTQDSRQKRRQDC). Repeat 2 spans residues 26–32 (LDPTGQY).

The protein localises to the cytoplasm. The protein resides in the nucleus. Its function is as follows. One of four peptides (tal-1A, tal-2A, tal-3A and tal-AA) produced from a polycistronic gene that function redundantly in several developmental processes. Required in early stages of leg development for the intercalation of the tarsal segments during the mid-third instar stage and later for tarsal joint formation. Promotes the post-translational modification of ovo isoform B (svb) into its active form which in turn initiates trichome development and promotes tarsal joint development. This is likely due to recruitment of the E3 ubiquitin-protein ligase Ubr3 to svb for ubiquitination of its N-terminus, converting svb into a transcriptional activator. Also enhances interaction of Ubr3 with Diap1. Required for correct wing and leg formation through its regulation of several genes including those in the Notch signaling pathway. Essential for denticle formation and may have a role in the developmental timing of trichome differentiation. Essential for the development of taenidial folds in the trachea. The protein is Peptide tarsal-less AA of Drosophila melanogaster (Fruit fly).